The primary structure comprises 242 residues: Probable transcriptional regulatory protein Dred_1658 (242 aa).

It belongs to the TACO1 family.

Its subcellular location is the cytoplasm. In Desulforamulus reducens (strain ATCC BAA-1160 / DSM 100696 / MI-1) (Desulfotomaculum reducens), this protein is Probable transcriptional regulatory protein Dred_1658.